We begin with the raw amino-acid sequence, 212 residues long: Thiamine-phosphate synthase (212 aa).

4-amino-2-methyl-5-(diphosphooxymethyl)pyrimidine-binding positions include 39 to 43 and asparagine 71; that span reads QLREK. Mg(2+) is bound by residues aspartate 72 and aspartate 91. Residue serine 110 participates in 4-amino-2-methyl-5-(diphosphooxymethyl)pyrimidine binding. 137–139 is a binding site for 2-[(2R,5Z)-2-carboxy-4-methylthiazol-5(2H)-ylidene]ethyl phosphate; sequence TPT. Residue lysine 140 participates in 4-amino-2-methyl-5-(diphosphooxymethyl)pyrimidine binding. Glycine 168 serves as a coordination point for 2-[(2R,5Z)-2-carboxy-4-methylthiazol-5(2H)-ylidene]ethyl phosphate.

It belongs to the thiamine-phosphate synthase family. The cofactor is Mg(2+).

It carries out the reaction 2-[(2R,5Z)-2-carboxy-4-methylthiazol-5(2H)-ylidene]ethyl phosphate + 4-amino-2-methyl-5-(diphosphooxymethyl)pyrimidine + 2 H(+) = thiamine phosphate + CO2 + diphosphate. The enzyme catalyses 2-(2-carboxy-4-methylthiazol-5-yl)ethyl phosphate + 4-amino-2-methyl-5-(diphosphooxymethyl)pyrimidine + 2 H(+) = thiamine phosphate + CO2 + diphosphate. The catalysed reaction is 4-methyl-5-(2-phosphooxyethyl)-thiazole + 4-amino-2-methyl-5-(diphosphooxymethyl)pyrimidine + H(+) = thiamine phosphate + diphosphate. The protein operates within cofactor biosynthesis; thiamine diphosphate biosynthesis; thiamine phosphate from 4-amino-2-methyl-5-diphosphomethylpyrimidine and 4-methyl-5-(2-phosphoethyl)-thiazole: step 1/1. Condenses 4-methyl-5-(beta-hydroxyethyl)thiazole monophosphate (THZ-P) and 2-methyl-4-amino-5-hydroxymethyl pyrimidine pyrophosphate (HMP-PP) to form thiamine monophosphate (TMP). This is Thiamine-phosphate synthase from Acidothermus cellulolyticus (strain ATCC 43068 / DSM 8971 / 11B).